The primary structure comprises 353 residues: D-alanine--D-alanine ligase (353 aa).

The region spanning 141-349 (KAAFAAAGLP…LEELVSQLVI (209 aa)) is the ATP-grasp domain. ATP is bound at residue 176–231 (EAKLKYPCFVKPANLGSSVGISKAQNRNELLIGLDKAASLDRRIVVEQGVSARELE). Mg(2+) is bound by residues Asp302, Glu316, and Asn318.

It belongs to the D-alanine--D-alanine ligase family. Mg(2+) is required as a cofactor. Mn(2+) serves as cofactor.

It is found in the cytoplasm. The catalysed reaction is 2 D-alanine + ATP = D-alanyl-D-alanine + ADP + phosphate + H(+). It participates in cell wall biogenesis; peptidoglycan biosynthesis. Its function is as follows. Cell wall formation. The polypeptide is D-alanine--D-alanine ligase (Prochlorococcus marinus (strain MIT 9303)).